A 208-amino-acid chain; its full sequence is Transmembrane protein 222 (208 aa).

Residues 1–34 (MAEAEGSSPLLLQPPPPPPRMAEVETPTGAETDM) form a disordered region. At 1-55 (MAEAEGSSPLLLQPPPPPPRMAEVETPTGAETDMKQYHGSGGVVMDVERSRFPYC) the chain is on the extracellular side. The helical transmembrane segment at 56 to 76 (VVWTPIPVLTWFFPIIGHMGI) threads the bilayer. Residues 77–164 (CTSAGVIRDF…MRYNNSTNWN (88 aa)) are Cytoplasmic-facing. A helical membrane pass occupies residues 165–185 (MVTLCCFCLIYGKYVSVGAFV). Position 186 (Lys-186) is a topological domain, extracellular. The helical transmembrane segment at 187–207 (TWLPFVLLLGIILTVSLVFNL) threads the bilayer. Residue Arg-208 is a topological domain, cytoplasmic.

The protein localises to the membrane. It is found in the cell projection. Its subcellular location is the dendrite. The protein is Transmembrane protein 222 (Tmem222) of Mus musculus (Mouse).